The following is an 830-amino-acid chain: Vacuolar protein sorting-associated protein 11 homolog (830 aa).

The RING-type; atypical zinc finger occupies 733-775 (CDICREMLSMQSIYFLCQHSFHEECLNYKSTKRQEKFLCIICK).

This sequence belongs to the VPS11 family. Part of the homotypic fusion and vacuole protein sorting (HOPS) complex, composed of Vps16A, car/Vps33A, dor/Vps18, Vps39, Vps11 and lt/Vps41. Unlike in other species, not part of the class C core vacuole/endosome tethering (CORVET) complex.

It is found in the late endosome membrane. Its subcellular location is the lysosome membrane. Its function is as follows. Part of the homotypic fusion and vacuole protein sorting (HOPS) tethering complex involved in endo-lysosomal vesicle trafficking and lysosome biogenesis, but unlike in many other species does not form part of the class C core vacuole/endosome tethering (CORVET) complex. The HOPS complex facilitates docking and fusion of lysosomes with late endosomes and several other types of vesicles. The HOPS complex is also involved in autophagy, pigment granule biogenesis and crinophagy (the elimination of unused secretory granules through fusion with lysosomes). The HOPS complex probably instigates autophagosome-lysosome fusion by binding autophagosome-associated Syx17/syntaxin 17 and promoting assembly of the trans-SNARE complex. Independent of Syx17/syntaxin 17, HOPS is involved in biosynthetic transport to lysosomes and lysosome-related organelles such as eye-pigment granules. Required for autophagocytosis-dependent remodeling of myofibrils and transverse-tubules (T-tubules) during metamorphosis. In Drosophila melanogaster (Fruit fly), this protein is Vacuolar protein sorting-associated protein 11 homolog.